We begin with the raw amino-acid sequence, 259 residues long: Ribosomal RNA small subunit methyltransferase J (259 aa).

S-adenosyl-L-methionine contacts are provided by residues 101–102 (RD), 117–118 (ER), 153–154 (SS), and D176.

It belongs to the methyltransferase superfamily. RsmJ family.

Its subcellular location is the cytoplasm. The catalysed reaction is guanosine(1516) in 16S rRNA + S-adenosyl-L-methionine = N(2)-methylguanosine(1516) in 16S rRNA + S-adenosyl-L-homocysteine + H(+). In terms of biological role, specifically methylates the guanosine in position 1516 of 16S rRNA. This chain is Ribosomal RNA small subunit methyltransferase J, found in Aliivibrio fischeri (strain MJ11) (Vibrio fischeri).